The primary structure comprises 129 residues: Azurin-2 (129 aa).

Positions 1–129 (AQCEATVESN…MMKGTLKLGS (129 aa)) constitute a Plastocyanin-like domain. A disulfide bridge connects residues C3 and C26. Cu cation is bound by residues H46, C112, H117, and M121.

Its subcellular location is the periplasm. Functionally, transfers electrons from cytochrome c551 to cytochrome oxidase. This chain is Azurin-2, found in Alcaligenes xylosoxydans xylosoxydans (Achromobacter xylosoxidans).